Consider the following 225-residue polypeptide: Phosphoserine phosphatase (225 aa).

Position 1 is an N-acetylmethionine (Met-1). Asp-20 functions as the Nucleophile in the catalytic mechanism. Residues Asp-20 and Asp-22 each contribute to the Mg(2+) site. Residue 20–22 participates in L-serine binding; that stretch reads DVD. The Proton donor role is filled by Asp-22. Residue Met-52 coordinates O-phospho-L-serine. Gly-53 lines the phosphate pocket. Residues 109 to 111 and Lys-158 contribute to the L-serine site; that span reads SGG. Residues 109–111 and Lys-158 contribute to the O-phospho-L-serine site; that span reads SGG. Mg(2+) is bound at residue Asp-179. Thr-182 lines the O-phospho-L-serine pocket. Thr-182 contributes to the phosphate binding site.

It belongs to the HAD-like hydrolase superfamily. SerB family. Homodimer. The cofactor is Mg(2+).

The protein localises to the cytoplasm. The protein resides in the cytosol. The catalysed reaction is O-phospho-L-serine + H2O = L-serine + phosphate. The enzyme catalyses O-phospho-D-serine + H2O = D-serine + phosphate. It participates in amino-acid biosynthesis; L-serine biosynthesis; L-serine from 3-phospho-D-glycerate: step 3/3. Inhibited by calcium ions. Catalyzes the last irreversible step in the biosynthesis of L-serine from carbohydrates, the dephosphorylation of O-phospho-L-serine to L-serine. L-serine can then be used in protein synthesis, to produce other amino acids, in nucleotide metabolism or in glutathione synthesis, or can be racemized to D-serine, a neuromodulator. May also act on O-phospho-D-serine. This chain is Phosphoserine phosphatase, found in Homo sapiens (Human).